We begin with the raw amino-acid sequence, 143 residues long: MPPKKKVAGLIKLQIKAGQATPAPPIGPALGQHGVNIMEFCKAYNAQTESQRGNVIPVEITVYEDRSFTFITKTPPAAELIKKAAGVEKGSGEPHVKKVANLTSAQVREIAEQKLQDLNAKDVDMAARIIAGTARSMGITVSD.

This sequence belongs to the universal ribosomal protein uL11 family. In terms of assembly, part of the ribosomal stalk of the 50S ribosomal subunit. Interacts with L10 and the large rRNA to form the base of the stalk. L10 forms an elongated spine to which L12 dimers bind in a sequential fashion forming a multimeric L10(L12)X complex. Post-translationally, one or more lysine residues are methylated.

Its function is as follows. Forms part of the ribosomal stalk which helps the ribosome interact with GTP-bound translation factors. The protein is Large ribosomal subunit protein uL11 of Kineococcus radiotolerans (strain ATCC BAA-149 / DSM 14245 / SRS30216).